We begin with the raw amino-acid sequence, 432 residues long: Probable D-serine dehydratase (432 aa).

Position 112 is an N6-(pyridoxal phosphate)lysine (lysine 112).

The protein belongs to the serine/threonine dehydratase family. DsdA subfamily. Pyridoxal 5'-phosphate serves as cofactor.

The enzyme catalyses D-serine = pyruvate + NH4(+). This Pediococcus pentosaceus (strain ATCC 25745 / CCUG 21536 / LMG 10740 / 183-1w) protein is Probable D-serine dehydratase.